The primary structure comprises 81 residues: MDPMLASASVIAAALAVGLAAIGPGIGQGNASGQAVSGIARQPEAEGKIRGTLLLTLAFMESLTIYGLVISLVLLFANPFA.

2 consecutive transmembrane segments (helical) span residues 6-26 and 57-77; these read ASASVIAAALAVGLAAIGPGI and LAFMESLTIYGLVISLVLLFA.

This sequence belongs to the ATPase C chain family. F-type ATPases have 2 components, F(1) - the catalytic core - and F(0) - the membrane proton channel. F(1) has five subunits: alpha(3), beta(3), gamma(1), delta(1), epsilon(1). F(0) has four main subunits: a(1), b(1), b'(1) and c(10-14). The alpha and beta chains form an alternating ring which encloses part of the gamma chain. F(1) is attached to F(0) by a central stalk formed by the gamma and epsilon chains, while a peripheral stalk is formed by the delta, b and b' chains.

It localises to the cellular thylakoid membrane. Its function is as follows. F(1)F(0) ATP synthase produces ATP from ADP in the presence of a proton or sodium gradient. F-type ATPases consist of two structural domains, F(1) containing the extramembraneous catalytic core and F(0) containing the membrane proton channel, linked together by a central stalk and a peripheral stalk. During catalysis, ATP synthesis in the catalytic domain of F(1) is coupled via a rotary mechanism of the central stalk subunits to proton translocation. Functionally, key component of the F(0) channel; it plays a direct role in translocation across the membrane. A homomeric c-ring of between 10-14 subunits forms the central stalk rotor element with the F(1) delta and epsilon subunits. In Gloeothece citriformis (strain PCC 7424) (Cyanothece sp. (strain PCC 7424)), this protein is ATP synthase subunit c.